The primary structure comprises 239 residues: Putative antitoxin VapB45 (239 aa).

Possibly the antitoxin component of a type II toxin-antitoxin (TA) system. Its cognate toxin is VapC45. This chain is Putative antitoxin VapB45, found in Mycobacterium tuberculosis (strain ATCC 25618 / H37Rv).